Reading from the N-terminus, the 358-residue chain is Peptide chain release factor 1 (358 aa).

Q233 bears the N5-methylglutamine mark.

This sequence belongs to the prokaryotic/mitochondrial release factor family. Methylated by PrmC. Methylation increases the termination efficiency of RF1.

The protein localises to the cytoplasm. In terms of biological role, peptide chain release factor 1 directs the termination of translation in response to the peptide chain termination codons UAG and UAA. The polypeptide is Peptide chain release factor 1 (Staphylococcus aureus (strain MSSA476)).